A 530-amino-acid chain; its full sequence is Ubiquitin carboxyl-terminal hydrolase 17-like protein 13 (530 aa).

The USP domain occupies 80-375; the sequence is AGLQNMGNTC…QAYVLFYIQK (296 aa). Residue Cys-89 is the Nucleophile of the active site. The active-site Proton acceptor is His-334. Basic and acidic residues-rich tracts occupy residues 382-392 and 398-412; these read SESVSRGREPR and DTDR…KRDH. Disordered stretches follow at residues 382–412 and 477–530; these read SESV…KRDH and NHHP…LVCQ. Polar residues predominate over residues 493 to 505; the sequence is TPTHQESMNTGTL. Basic residues predominate over residues 510–524; it reads GRARRSKGKNKHSKR.

Belongs to the peptidase C19 family. USP17 subfamily.

It localises to the nucleus. The protein localises to the endoplasmic reticulum. The catalysed reaction is Thiol-dependent hydrolysis of ester, thioester, amide, peptide and isopeptide bonds formed by the C-terminal Gly of ubiquitin (a 76-residue protein attached to proteins as an intracellular targeting signal).. In terms of biological role, deubiquitinating enzyme that removes conjugated ubiquitin from specific proteins to regulate different cellular processes that may include cell proliferation, progression through the cell cycle, apoptosis, cell migration, and the cellular response to viral infection. In Homo sapiens (Human), this protein is Ubiquitin carboxyl-terminal hydrolase 17-like protein 13 (USP17L13).